The following is a 177-amino-acid chain: Cell division protein ZapC (177 aa).

This sequence belongs to the ZapC family. Interacts directly with FtsZ.

It is found in the cytoplasm. Contributes to the efficiency of the cell division process by stabilizing the polymeric form of the cell division protein FtsZ. Acts by promoting interactions between FtsZ protofilaments and suppressing the GTPase activity of FtsZ. The polypeptide is Cell division protein ZapC (Shewanella oneidensis (strain ATCC 700550 / JCM 31522 / CIP 106686 / LMG 19005 / NCIMB 14063 / MR-1)).